The sequence spans 1142 residues: Serine/threonine-protein kinase GIN4 (1142 aa).

Positions 19–289 (WKLGETLGLG…TRDILKHPLL (271 aa)) constitute a Protein kinase domain. Residues 25 to 33 (LGLGSTGKV) and Lys-48 contribute to the ATP site. The active-site Proton acceptor is the Asp-156. Disordered regions lie at residues 378-412 (KKRQ…SVTS) and 425-469 (ASSA…RNKR). The segment covering 382–395 (SISSVSVSPSKKVS) has biased composition (low complexity). At Ser-406 the chain carries Phosphoserine. Positions 425–440 (ASSASSSNLTTPGSSK) are enriched in low complexity. Positions 441–452 (RLSKNFSSKKKL) are enriched in basic residues. The segment covering 454–465 (TIVNQSSPTPAS) has biased composition (polar residues). Phosphoserine occurs at positions 465, 471, 617, 689, 719, 805, 807, and 883. Residues 676 to 698 (DPGIMFSSPTEEVSPVEPKRTEN) are disordered. Thr-884 carries the phosphothreonine modification. The segment at 903–1031 (NEAKQTDNLH…NTAIGNGSFF (129 aa)) is disordered. Basic and acidic residues-rich tracts occupy residues 923–937 (NELR…DQAH), 962–984 (KEEK…KVVD), and 996–1021 (KIRE…KQDK). Position 930 is a phosphoserine (Ser-930).

The protein belongs to the protein kinase superfamily. CAMK Ser/Thr protein kinase family. NIM1 subfamily. In terms of assembly, component of the GIN4 complex composed of at least BNI5, CDC3, CDC10, CDC11, CDC12, GIN4, NAP1 and SHS1 which forms a ring at the bud neck.

The protein resides in the cytoplasm. Its subcellular location is the bud neck. It carries out the reaction L-seryl-[protein] + ATP = O-phospho-L-seryl-[protein] + ADP + H(+). The enzyme catalyses L-threonyl-[protein] + ATP = O-phospho-L-threonyl-[protein] + ADP + H(+). Its function is as follows. Serine/threonine-protein kinase which regulates the localization and the function of the septins during mitosis. Phosphorylates SHS1. The chain is Serine/threonine-protein kinase GIN4 (GIN4) from Saccharomyces cerevisiae (strain ATCC 204508 / S288c) (Baker's yeast).